The following is a 460-amino-acid chain: Cysteine--tRNA ligase (460 aa).

Cysteine 28 provides a ligand contact to Zn(2+). The 'HIGH' region signature appears at 30 to 40; it reads MTVYDYCHLGH. Cysteine 209, histidine 234, and glutamate 238 together coordinate Zn(2+). Residues 266 to 270 carry the 'KMSKS' region motif; that stretch reads KMSKS. Lysine 269 contributes to the ATP binding site.

The protein belongs to the class-I aminoacyl-tRNA synthetase family. In terms of assembly, monomer. Requires Zn(2+) as cofactor.

It localises to the cytoplasm. The catalysed reaction is tRNA(Cys) + L-cysteine + ATP = L-cysteinyl-tRNA(Cys) + AMP + diphosphate. This Pseudomonas paraeruginosa (strain DSM 24068 / PA7) (Pseudomonas aeruginosa (strain PA7)) protein is Cysteine--tRNA ligase.